The chain runs to 366 residues: Phosphate acyltransferase (366 aa).

Residues 334–366 (ESAKNKETQSKQASTKNTAPKTSETTKESQQSL) form a disordered region. Residues 343–366 (SKQASTKNTAPKTSETTKESQQSL) show a composition bias toward polar residues.

The protein belongs to the PlsX family. Homodimer. Probably interacts with PlsY.

It localises to the cytoplasm. It catalyses the reaction a fatty acyl-[ACP] + phosphate = an acyl phosphate + holo-[ACP]. Its pathway is lipid metabolism; phospholipid metabolism. In terms of biological role, catalyzes the reversible formation of acyl-phosphate (acyl-PO(4)) from acyl-[acyl-carrier-protein] (acyl-ACP). This enzyme utilizes acyl-ACP as fatty acyl donor, but not acyl-CoA. The chain is Phosphate acyltransferase from Onion yellows phytoplasma (strain OY-M).